Here is a 256-residue protein sequence, read N- to C-terminus: Cysteine-rich repeat secretory protein 42 (256 aa).

An N-terminal signal peptide occupies residues 1 to 26; it reads MSSVFGSVHILAMIAIQLLLTHSVSS. 2 Gnk2-homologous domains span residues 33-136 and 142-253; these read YLHH…SVAS and YEND…LYPF.

The protein belongs to the cysteine-rich repeat secretory protein family.

Its subcellular location is the secreted. This chain is Cysteine-rich repeat secretory protein 42 (CRRSP42), found in Arabidopsis thaliana (Mouse-ear cress).